The chain runs to 583 residues: Torsin-1A-interacting protein 1 (583 aa).

Over 1–339 (MAGERWRAEG…DESSVKIKWW (339 aa)) the chain is Nuclear. Residues 23-208 (APIREGRRRL…PPLRSPRPDA (186 aa)) form a disordered region. S60 carries the post-translational modification Phosphoserine. Basic and acidic residues-rich tracts occupy residues 70–101 (FEPR…EVRE) and 115–132 (GPQE…RLEQ). S134, S142, S155, and S157 each carry phosphoserine. Residues 166–188 (SSQPVTSQTVSKKTVRTPETSVM) are compositionally biased toward polar residues. S189 is subject to Phosphoserine. A Phosphothreonine modification is found at T222. A phosphoserine mark is found at S228, S231, and S242. A Glycyl lysine isopeptide (Lys-Gly) (interchain with G-Cter in SUMO2) cross-link involves residue K309. At S316 the chain carries Phosphoserine. The chain crosses the membrane as a helical span at residues 340 to 360 (LLILVAALAMGIYWFFHTPVV). The segment at 356-583 (HTPVVETTAV…ENALKAGSCL (228 aa)) is interaction with TOR1A. Residues 360–388 (VETTAVQEFQNQMKQLQSKYQSQDEKLWK) are a coiled coil. The Perinuclear space portion of the chain corresponds to 361–583 (ETTAVQEFQN…ENALKAGSCL (223 aa)). Residue N399 is glycosylated (N-linked (GlcNAc...) asparagine).

It belongs to the TOR1AIP family. Interacts with ATP1B4. Interacts with TOR1A (ATP-bound). Interacts with TOR1B, TOR2A and TOR3A. Interacts with VIM.

Its subcellular location is the nucleus inner membrane. Required for nuclear membrane integrity. Induces TOR1A and TOR1B ATPase activity and is required for their location on the nuclear membrane. Binds to A- and B-type lamins. Possible role in membrane attachment and assembly of the nuclear lamina. The sequence is that of Torsin-1A-interacting protein 1 (Tor1aip1) from Rattus norvegicus (Rat).